A 564-amino-acid polypeptide reads, in one-letter code: Esterase FE4 (564 aa).

Positions 1-23 are cleaved as a signal peptide; sequence MKNTCGILLNLFLFIGCFLTCSA. N-linked (GlcNAc...) asparagine glycosylation occurs at Asn-81. A disulfide bond links Cys-89 and Cys-106. Ser-214 acts as the Acyl-ester intermediate in catalysis. Cys-266 and Cys-277 form a disulfide bridge. The N-linked (GlcNAc...) asparagine glycan is linked to Asn-269. Glu-339 acts as the Charge relay system in catalysis. 3 N-linked (GlcNAc...) asparagine glycosylation sites follow: Asn-371, Asn-404, and Asn-443. His-463 serves as the catalytic Charge relay system.

It belongs to the type-B carboxylesterase/lipase family.

The catalysed reaction is a carboxylic ester + H2O = an alcohol + a carboxylate + H(+). Overproduction of nonspecific esterases is a common mechanism of resistance to organophosphate insecticides. This Myzus persicae (Green peach aphid) protein is Esterase FE4.